A 963-amino-acid chain; its full sequence is Exportin-T (963 aa).

The residue at position 1 (Met1) is an N-acetylmethionine. N6-acetyllysine is present on Lys635.

Belongs to the exportin family. In terms of assembly, found in a complex with XPOT, Ran and tRNA. Probably found in a complex with nucleoporins. Interacts with Ran and tRNA in a GTP-dependent manner.

It is found in the nucleus. Its subcellular location is the cytoplasm. Mediates the nuclear export of aminoacylated tRNAs. In the nucleus binds to tRNA and to the GTPase Ran in its active GTP-bound form. Docking of this trimeric complex to the nuclear pore complex (NPC) is mediated through binding to nucleoporins. Upon transit of a nuclear export complex into the cytoplasm, disassembling of the complex and hydrolysis of Ran-GTP to Ran-GDP (induced by RANBP1 and RANGAP1, respectively) cause release of the tRNA from the export receptor. XPOT then return to the nuclear compartment and mediate another round of transport. The directionality of nuclear export is thought to be conferred by an asymmetric distribution of the GTP- and GDP-bound forms of Ran between the cytoplasm and nucleus. This chain is Exportin-T (Xpot), found in Mus musculus (Mouse).